The chain runs to 643 residues: Protein RTF1 homolog (643 aa).

Disordered stretches follow at residues 1–107 and 124–262; these read MGDL…YKNE and ILSE…SDVP. An N-acetylglycine modification is found at G2. Over residues 65–77 the composition is skewed to basic and acidic residues; sequence KRLEAEREDRAAR. The residue at position 87 (S87) is a Phosphoserine. A compositionally biased stretch (basic and acidic residues) spans 124–157; sequence ILSERADKKGDKNFTEKLRSKRESEKTPVSKKET. The span at 162 to 171 shows a compositional bias: low complexity; the sequence is ASRGVRSSAR. Residues 172-188 are compositionally biased toward basic and acidic residues; that stretch reads SADRAAAKDDALNELRA. The span at 225–235 shows a compositional bias: low complexity; the sequence is SSNLSSSSQSD. Residues 261–396 enclose the Plus3 domain; the sequence is VPTFEDVKEV…KKEAIQRTNS (136 aa).

As to quaternary structure, component of the nuclear PAF1 complex (PAF1C), which consists of VIP2/ELF7/PAF1, VIP3/SKI8/WDR61, VIP4/LEO1, VIP5/RTF1, VIP6/ELF8/CTR9 and CDC73.

It localises to the nucleus. Functionally, component of the PAF1 complex (PAF1C) which is involved in histone modifications such as methylation on histone H3 'Lys-4' (H3K4me3). Involved in regulation of flowering time. Required for the expression of the flowering repressors and FLC and MADS-box genes of the MAF family. Involved in the control of seed dormancy and germination. This chain is Protein RTF1 homolog, found in Arabidopsis thaliana (Mouse-ear cress).